We begin with the raw amino-acid sequence, 362 residues long: Uroporphyrinogen decarboxylase (362 aa).

Substrate-binding positions include 39-43 (RQAGR), Asp-88, Tyr-165, Thr-220, and His-334.

The protein belongs to the uroporphyrinogen decarboxylase family. Homodimer.

The protein localises to the cytoplasm. The catalysed reaction is uroporphyrinogen III + 4 H(+) = coproporphyrinogen III + 4 CO2. Its pathway is porphyrin-containing compound metabolism; protoporphyrin-IX biosynthesis; coproporphyrinogen-III from 5-aminolevulinate: step 4/4. Catalyzes the decarboxylation of four acetate groups of uroporphyrinogen-III to yield coproporphyrinogen-III. This Synechococcus sp. (strain JA-3-3Ab) (Cyanobacteria bacterium Yellowstone A-Prime) protein is Uroporphyrinogen decarboxylase.